Reading from the N-terminus, the 133-residue chain is MPPKTRGAVRKPRKKDKKNIALGQAHIKSTFNNTIVSITDPNGAVISWASAGEVGFKGSRKSTPFAAQMAAEAAAKRAQEHGLKKVDVFVKGPGSGRETAIRSLQAAGLEVGSIQDVTPAAHNGCRPPKRRRV.

The disordered stretch occupies residues 1–23 (MPPKTRGAVRKPRKKDKKNIALG). Residues 7–17 (GAVRKPRKKDK) show a composition bias toward basic residues.

This sequence belongs to the universal ribosomal protein uS11 family. As to quaternary structure, part of the 30S ribosomal subunit. Interacts with proteins S7 and S18. Binds to IF-3.

Functionally, located on the platform of the 30S subunit, it bridges several disparate RNA helices of the 16S rRNA. Forms part of the Shine-Dalgarno cleft in the 70S ribosome. The polypeptide is Small ribosomal subunit protein uS11 (Arthrobacter sp. (strain FB24)).